Consider the following 391-residue polypeptide: ATP phosphoribosyltransferase regulatory subunit (391 aa).

Belongs to the class-II aminoacyl-tRNA synthetase family. HisZ subfamily. Heteromultimer composed of HisG and HisZ subunits.

Its subcellular location is the cytoplasm. It participates in amino-acid biosynthesis; L-histidine biosynthesis; L-histidine from 5-phospho-alpha-D-ribose 1-diphosphate: step 1/9. Its function is as follows. Required for the first step of histidine biosynthesis. May allow the feedback regulation of ATP phosphoribosyltransferase activity by histidine. This is ATP phosphoribosyltransferase regulatory subunit from Prochlorococcus marinus (strain NATL1A).